A 183-amino-acid polypeptide reads, in one-letter code: MTQYRGGYIASCYAQALFSVSDVNSICKDVEFVISVLENDNNVAMFLSSPRVSKESKISLIKVIGDYIDSILVKFMIIVIESNRGNILLQIFSAFLDLVRKYNKEVNISVTSCALLTKQEEEGICNALLERYGKVVGITNNLDPSILGGFIIRVNFDVIDVSLNSYLQSLRELSKMSVCSISE.

This sequence belongs to the ATPase delta chain family. F-type ATPases have 2 components, F(1) - the catalytic core - and F(0) - the membrane proton channel. F(1) has five subunits: alpha(3), beta(3), gamma(1), delta(1), epsilon(1). F(0) has three main subunits: a(1), b(2) and c(10-14). The alpha and beta chains form an alternating ring which encloses part of the gamma chain. F(1) is attached to F(0) by a central stalk formed by the gamma and epsilon chains, while a peripheral stalk is formed by the delta and b chains.

Its subcellular location is the cell inner membrane. Functionally, f(1)F(0) ATP synthase produces ATP from ADP in the presence of a proton or sodium gradient. F-type ATPases consist of two structural domains, F(1) containing the extramembraneous catalytic core and F(0) containing the membrane proton channel, linked together by a central stalk and a peripheral stalk. During catalysis, ATP synthesis in the catalytic domain of F(1) is coupled via a rotary mechanism of the central stalk subunits to proton translocation. This protein is part of the stalk that links CF(0) to CF(1). It either transmits conformational changes from CF(0) to CF(1) or is implicated in proton conduction. This chain is ATP synthase subunit delta, found in Ehrlichia canis (strain Jake).